The chain runs to 521 residues: Bifunctional purine biosynthesis protein PurH (521 aa).

The region spanning 1-147 (MGEITRALIS…KNWEGVTVLV (147 aa)) is the MGS-like domain.

It belongs to the PurH family.

The enzyme catalyses (6R)-10-formyltetrahydrofolate + 5-amino-1-(5-phospho-beta-D-ribosyl)imidazole-4-carboxamide = 5-formamido-1-(5-phospho-D-ribosyl)imidazole-4-carboxamide + (6S)-5,6,7,8-tetrahydrofolate. It carries out the reaction IMP + H2O = 5-formamido-1-(5-phospho-D-ribosyl)imidazole-4-carboxamide. Its pathway is purine metabolism; IMP biosynthesis via de novo pathway; 5-formamido-1-(5-phospho-D-ribosyl)imidazole-4-carboxamide from 5-amino-1-(5-phospho-D-ribosyl)imidazole-4-carboxamide (10-formyl THF route): step 1/1. It participates in purine metabolism; IMP biosynthesis via de novo pathway; IMP from 5-formamido-1-(5-phospho-D-ribosyl)imidazole-4-carboxamide: step 1/1. The sequence is that of Bifunctional purine biosynthesis protein PurH from Acidithiobacillus ferrooxidans (strain ATCC 53993 / BNL-5-31) (Leptospirillum ferrooxidans (ATCC 53993)).